Consider the following 894-residue polypeptide: E3 ubiquitin-protein ligase SH3RF1 (894 aa).

The segment at 12–53 adopts an RING-type zinc-finger fold; the sequence is CPVCLERLDASAKVLPCQHTFCKRCLLGIVGSRNELRCPECR. SH3 domains lie at 134–193 and 196–259; these read PQLP…IIKP and QPPP…FNSA. A disordered region spans residues 274–323; it reads VDTAECPSATAAQSSSASKHSDTKKNTRKRHSFTSLTMANKSSQASQNRH. Positions 281–291 are enriched in low complexity; sequence SATAAQSSSAS. Positions 293–363 are interaction with RAC1; the sequence is HSDTKKNTRK…APSQVHISTT (71 aa). Ser305 carries the phosphoserine modification. Positions 306–322 are enriched in polar residues; it reads FTSLTMANKSSQASQNR. The interaction with AKT2 stretch occupies residues 448-551; that stretch reads HLRPQTRPSV…STAGGPAQKP (104 aa). Positions 453 to 514 constitute an SH3 3 domain; sequence TRPSVYVAIY…PGNYVAPVTR (62 aa). 2 disordered regions span residues 526–556 and 682–751; these read MSTAGQASRGVTMVSPSTAGGPAQKPQGNGV and LETE…PTLD. Ser540 is modified (phosphoserine). Residues 700-713 are compositionally biased toward polar residues; it reads SPESAASACGNSSA. A compositionally biased stretch (basic and acidic residues) spans 715-726; sequence KPDKDSKKEKKG. At Ser743 the chain carries Phosphoserine. The SH3 4 domain maps to 835–894; it reads VVCERHRVVVSYPPQSEAELELKEGDIVFVHKKREDGWFKGTLQRNGKTGLFPGSFVENI.

This sequence belongs to the SH3RF family. As to quaternary structure, interacts with HERP1. Interacts with RAC1; in a GTP-dependent manner. Interacts with MAP3K10/MLK2 and MAP3K11/MLK3. Interacts with MAPK8IP; this interaction leads to the PJAC complex (POSH-JIP or SH3RF1/MAPK8IP apoptotic complex) with a 1:1 ratio. Interacts with SIAH1. Probably part of a signaling complex that may contain SH3RF1, MAPK8IP, DLK1, MAP2K4/MKK4, MAP2K7/MKK7, MAPK8/JNK1, MAPK9/JNK2, AKT1 and AKT2. Found in a complex with RAC2, MAP3K7/TAK1, MAP2K7/MKK7, MAPK8IP1/JIP1, MAPK8/JNK1 and MAPK9/JNK2. Found in a complex with RAC1, MAP3K11/MLK3, MAP2K7/MKK7, MAPK8IP1/JIP1 and MAPK8/JNK1. Interacts with SH3RF2. Phosphorylated at Ser-305 by AKT1 and AKT2. When phosphorylated, it has reduced ability to bind Rac. Post-translationally, autoubiquitinated. Ubiquitinated by SH3RF2, leading to proteasome-mediated degradation.

The protein localises to the cytoplasm. Its subcellular location is the perinuclear region. It localises to the cell projection. It is found in the lamellipodium. The protein resides in the golgi apparatus. The protein localises to the trans-Golgi network. It carries out the reaction S-ubiquitinyl-[E2 ubiquitin-conjugating enzyme]-L-cysteine + [acceptor protein]-L-lysine = [E2 ubiquitin-conjugating enzyme]-L-cysteine + N(6)-ubiquitinyl-[acceptor protein]-L-lysine.. It participates in protein modification; protein ubiquitination. Has E3 ubiquitin-protein ligase activity. In the absence of an external substrate, it can catalyze self-ubiquitination. Stimulates ubiquitination of potassium channel KCNJ1, enhancing it's dynamin-dependent and clathrin-independent endocytosis. Acts as a scaffold protein that coordinates with MAPK8IP1/JIP1 in organizing different components of the JNK pathway, including RAC1 or RAC2, MAP3K11/MLK3 or MAP3K7/TAK1, MAP2K7/MKK7, MAPK8/JNK1 and/or MAPK9/JNK2 into a functional multiprotein complex to ensure the effective activation of the JNK signaling pathway. Regulates the differentiation of CD4(+) and CD8(+) T-cells and promotes T-helper 1 (Th1) cell differentiation. Regulates the activation of MAPK8/JNK1 and MAPK9/JNK2 in CD4(+) T-cells and the activation of MAPK8/JNK1 in CD8(+) T-cells. Plays a crucial role in the migration of neocortical neurons in the developing brain. Controls proper cortical neuronal migration and the formation of proximal cytoplasmic dilation in the leading process (PCDLP) in migratory neocortical neurons by regulating the proper localization of activated RAC1 and F-actin assembly. This Rattus norvegicus (Rat) protein is E3 ubiquitin-protein ligase SH3RF1 (Sh3rf1).